Here is a 659-residue protein sequence, read N- to C-terminus: Nicastrin (659 aa).

The N-terminal stretch at 1–22 is a signal peptide; that stretch reads MKIKNYFIIVFIIIVLSTDVIS. The Extracellular segment spans residues 23–627; sequence SQSSIEDKMY…LFQVGSYANE (605 aa). Residues Asn-94, Asn-172, Asn-305, Asn-389, Asn-451, Asn-475, Asn-550, Asn-553, and Asn-600 are each glycosylated (N-linked (GlcNAc...) asparagine). A helical transmembrane segment spans residues 628-648; that stretch reads IWFLVSGLIELLLSVGIIFYI. Residues 649 to 659 are Cytoplasmic-facing; the sequence is KKYLSKRYKLL.

The protein belongs to the nicastrin family. As to quaternary structure, homodimer. Component of the gamma-secretase complex, a complex composed of a presenilin homodimer, nicastrin, aph1 and pen2.

It is found in the membrane. In terms of biological role, essential subunit of the gamma-secretase complex, an endoprotease complex that catalyzes the intramembrane cleavage of integral membrane proteins such as Notch receptors and APP (amyloid-beta precursor protein). It probably represents a stabilizing cofactor required for the assembly of the gamma-secretase complex. This Dictyostelium discoideum (Social amoeba) protein is Nicastrin (ncstn).